We begin with the raw amino-acid sequence, 389 residues long: Flavin-dependent monooxygenase (389 aa).

FAD contacts are provided by residues 12–15 (AGVA), 34–35 (EK), glutamine 44, arginine 105, tyrosine 267, and aspartate 289.

It belongs to the aromatic-ring hydroxylase family. Requires FAD as cofactor.

The enzyme catalyses a tetracycline + NADPH + O2 + H(+) = a (1S,10aS)-3-(CONH2)-1-(Me2N)-3,3a,4,6-(HO)4-2,5-dioxo-1H,10aH,11H,11aH-cyclopenta[b]anthracene + CO + NADP(+) + H2O. It catalyses the reaction 7-chlorotetracycline + NADPH + O2 + H(+) = (1S,10S,10aS)-3-(CONH2)-9-Cl-1-(Me2N)-3,3a,4,10-(HO)4-10-Me-2,5-dioxo-1H,10aH,11H,11aH-cyclopenta[b]anthracen-6-olate + CO + NADP(+) + H2O. Its activity is regulated as follows. Inhibited by anhydrotetracycline. In terms of biological role, an FAD-requiring monooxygenase active on tetracycline antibiotic and some of its derivatives, which leads to their inactivation. Expression in E.coli confers high resistance to tetracycline and oxytetracycline, does not confer resistance to minocycline or tigecycline. The reaction requires NADPH. Expression in L.pneumophila confers resistance to tetracycline. Degrades and confers resistance to tetracycline and chlortetracycline. This is Flavin-dependent monooxygenase (tet(56)) from Legionella longbeachae serogroup 1 (strain NSW150).